Consider the following 547-residue polypeptide: MGSEVNRPLADFPANIWEDPLTSFSKSDLGTETFKEKHSTLKEAVKEAFMSSKANPIENIKFIDALCRLGVSYHFEKDIVEQLDKSFDCLDFPQMVRQEGCDLYTVGIIFQVFRQFGFKLSADVFEKFKDENGKFKGHLVTDAYGMLSLYEAAQWGTHGEDIIDEALAFSRSHLEEISSRSSPHLAIRIKNALKHPYHKGISRIETRQYISYYEEEESCDPTLLEFAKIDFNLLQILHREELACVTRWHHEMEFKSKVTYTRHRITEAYLWSLGTYFEPQYSQARVITTMALILFTALDDMYDAYGTMEELELFTDAMDEWLPVVPDEIPIPDSMKFIYNVTVEFYDKLDEELEKEGRSGCGFHLKKSLQKTANGYMQEAKWLKKDYIATFDEYKENAILSSGYYALIAMTFVRMTDVAKLDAFEWLSSHPKIRVASEIISRFTDDISSYEFEHKREHVATGIDCYMQQFGVSKERAVEVMGNIVSDAWKDLNQELMRPHVFPFPLLMRVLNLSRVIDVFYRYQDAYTNPKLLKEHIVSLLIETIPI.

(2E,6E)-farnesyl diphosphate is bound by residues Arg262, Asp299, Asp303, Arg442, and Asp445. Residues Asp299 and Asp303 each contribute to the Mg(2+) site. A DDXXD motif motif is present at residues 299-303 (DDMYD). 4 residues coordinate Mg(2+): Asp445, Asp446, Ser449, and Glu453.

The protein belongs to the terpene synthase family. Tpsa subfamily. Monomer. Requires Mg(2+) as cofactor. It depends on Mn(2+) as a cofactor. Expressed exclusively in flowers. Expressed in the flower stigmata and also detected in the mesocarp cell layers of the silique wall.

Its subcellular location is the cytoplasm. It catalyses the reaction (2E,6E)-farnesyl diphosphate = (-)-(E)-beta-caryophyllene + diphosphate. The enzyme catalyses (2E,6E)-farnesyl diphosphate = alpha-copaene + diphosphate. The catalysed reaction is (2E,6E)-farnesyl diphosphate = alpha-humulene + diphosphate. It carries out the reaction (2E,6E)-farnesyl diphosphate = (1S,2S,4R)-beta-elemene + diphosphate. The protein operates within secondary metabolite biosynthesis; terpenoid biosynthesis. Involved in sesquiterpene (C15) biosynthesis. The major products are beta-caryophyllene and alpha-humulene. Does not convert geranyl diphosphate (GPP) to any monoterpenes. The protein is Alpha-humulene/(-)-(E)-beta-caryophyllene synthase of Arabidopsis thaliana (Mouse-ear cress).